The sequence spans 533 residues: Inositol-3-phosphate synthase (533 aa).

Residue threonine 48 is modified to Phosphothreonine. NAD(+) contacts are provided by glycine 74, glycine 75, asparagine 76, asparagine 77, and aspartate 148. Phosphoserine is present on residues serine 177 and serine 184. 17 residues coordinate NAD(+): serine 184, isoleucine 185, glutamine 195, aspartate 196, arginine 198, threonine 244, alanine 245, asparagine 246, threonine 247, glycine 295, serine 296, aspartate 320, leucine 321, serine 323, asparagine 354, asparagine 355, and aspartate 356. Serine 296 carries the post-translational modification Phosphoserine. The residue at position 368 (serine 368) is a Phosphoserine. Lysine 369 is a binding site for NAD(+). Position 374 is a phosphoserine (serine 374). NAD(+) is bound by residues glycine 409, aspartate 410, aspartate 438, and serine 439.

The protein belongs to the myo-inositol 1-phosphate synthase family. Homotetramer. NAD(+) is required as a cofactor. Phosphorylation at Ser-184 and Ser-374 is associated with a decrease in activity. Increasingly phosphorylated in presence of valproate.

It is found in the cytoplasm. It catalyses the reaction D-glucose 6-phosphate = 1D-myo-inositol 3-phosphate. The protein operates within polyol metabolism; myo-inositol biosynthesis; myo-inositol from D-glucose 6-phosphate: step 1/2. With respect to regulation, competitively inhibited by myo-2-inosose 1-phosphate, which is also an intermediate in the catalytic reaction. Competitively inhibited by 2-deoxy-myo-inositol 1-phosphate (dMIP), 1-deoxy-1-(phosphonomethyl)-myo-2-inosose (DPMI), dihydroxyacetone phosphate (DHAP), 6-deoxy-D-glucose 6-(E)-vinylhomophosphonate, 6-deoxy-D-glucitol 6-(E)-vinylhomophosphonate, 2,6-dideoxy-D-glucose 6-(E)-vinylhomophosphonate and 2,6-dideoxy-D-glucitol 6-(E)-vinylhomophosphonate. Inhibited by 2-deoxyglucitol 6-phosphate (dgtolP). In terms of biological role, key enzyme in myo-inositol biosynthesis pathway that catalyzes the conversion of glucose 6-phosphate to 1-myo-inositol 1-phosphate in a NAD-dependent manner. Rate-limiting enzyme in the synthesis of all inositol-containing compounds. The protein is Inositol-3-phosphate synthase (INO1) of Saccharomyces cerevisiae (strain ATCC 204508 / S288c) (Baker's yeast).